Reading from the N-terminus, the 95-residue chain is Large ribosomal subunit protein uL24c (95 aa).

Belongs to the universal ribosomal protein uL24 family. In terms of assembly, part of the 50S ribosomal subunit.

It is found in the plastid. The protein resides in the chloroplast. Its function is as follows. One of two assembly initiator proteins, it binds directly to the 5'-end of the 23S rRNA, where it nucleates assembly of the 50S subunit. In Porphyra purpurea (Red seaweed), this protein is Large ribosomal subunit protein uL24c (rpl24).